A 159-amino-acid chain; its full sequence is 6,7-dimethyl-8-ribityllumazine synthase (159 aa).

5-amino-6-(D-ribitylamino)uracil contacts are provided by residues W26, 57–59 (ALE), and 79–81 (CVV). Residue 84–85 (GT) coordinates (2S)-2-hydroxy-3-oxobutyl phosphate. H87 acts as the Proton donor in catalysis. 5-amino-6-(D-ribitylamino)uracil is bound at residue N112. A (2S)-2-hydroxy-3-oxobutyl phosphate-binding site is contributed by R126.

The protein belongs to the DMRL synthase family.

The catalysed reaction is (2S)-2-hydroxy-3-oxobutyl phosphate + 5-amino-6-(D-ribitylamino)uracil = 6,7-dimethyl-8-(1-D-ribityl)lumazine + phosphate + 2 H2O + H(+). Its pathway is cofactor biosynthesis; riboflavin biosynthesis; riboflavin from 2-hydroxy-3-oxobutyl phosphate and 5-amino-6-(D-ribitylamino)uracil: step 1/2. Catalyzes the formation of 6,7-dimethyl-8-ribityllumazine by condensation of 5-amino-6-(D-ribitylamino)uracil with 3,4-dihydroxy-2-butanone 4-phosphate. This is the penultimate step in the biosynthesis of riboflavin. In Corynebacterium glutamicum (strain ATCC 13032 / DSM 20300 / JCM 1318 / BCRC 11384 / CCUG 27702 / LMG 3730 / NBRC 12168 / NCIMB 10025 / NRRL B-2784 / 534), this protein is 6,7-dimethyl-8-ribityllumazine synthase.